A 258-amino-acid chain; its full sequence is MGVERIKAAFENGKKAFIPYVMGGDGGLEILKERIRFLDEAGASIVEIGIPFSDPVADGPTIQRAGKRALDSGVTVKGIFQALIEVRKEVQIPFVLMTYLNPVLAFGKERFIENCMEAGVDGIIVPDLPYEEQDIIAPLLREANIALIPLVTVTSPIERIKKIMSESEGFVYAVTVAGVTGVRQNFKDEIHSYLEKVKSHTHLPVVAGFGISTKEHVEEMVTICDGVVVGSKVIELLENEKREEICEFIQATKQKEEA.

Active-site proton acceptor residues include Glu47 and Asp58.

Belongs to the TrpA family. Tetramer of two alpha and two beta chains.

The enzyme catalyses (1S,2R)-1-C-(indol-3-yl)glycerol 3-phosphate + L-serine = D-glyceraldehyde 3-phosphate + L-tryptophan + H2O. It participates in amino-acid biosynthesis; L-tryptophan biosynthesis; L-tryptophan from chorismate: step 5/5. The alpha subunit is responsible for the aldol cleavage of indoleglycerol phosphate to indole and glyceraldehyde 3-phosphate. This Bacillus thuringiensis (strain Al Hakam) protein is Tryptophan synthase alpha chain.